Reading from the N-terminus, the 99-residue chain is Cysteine-rich C-terminal protein 1 (99 aa).

Disordered stretches follow at residues 1–42 and 65–99; these read MSSQ…CCGS and RRRRRQRSSGCCCCGGGSQRSQRSNNRSSGCCSGC. Residues 22–32 show a composition bias toward pro residues; sequence APCPAPAPTPA. Residues 83–99 show a composition bias toward low complexity; sequence QRSQRSNNRSSGCCSGC.

The polypeptide is Cysteine-rich C-terminal protein 1 (CRCT1) (Homo sapiens (Human)).